Reading from the N-terminus, the 845-residue chain is BLOC-2 complex member HPS5 homolog (845 aa).

Residues 239–268 are disordered; sequence PTEEDLEDAKSMEGSDDNDNDQRSSPSGVK.

It belongs to the HPS5 family.

Its function is as follows. Has a role in the biogenesis of eye pigment granules. Eye pigment granules are specialized forms of late endosomes or lysosomes. Biogenesis of pigment granules in the eye requires molecular components required for protein delivery to lysosomes. The sequence is that of BLOC-2 complex member HPS5 homolog from Aedes aegypti (Yellowfever mosquito).